The sequence spans 274 residues: Large ribosomal subunit protein uL2cz/uL2cy (274 aa).

2 disordered regions span residues 1 to 21 and 225 to 254; these read MAIH…VDSQ and PVDH…PALG.

It belongs to the universal ribosomal protein uL2 family. In terms of assembly, part of the 50S ribosomal subunit.

The protein localises to the plastid. It localises to the chloroplast. The polypeptide is Large ribosomal subunit protein uL2cz/uL2cy (rpl2-A) (Draba nemorosa (Woodland whitlowgrass)).